The primary structure comprises 294 residues: Energy-coupling factor transporter ATP-binding protein EcfA1 (294 aa).

The region spanning 27-260 (IEFENVYFAY…EERLLKMQLD (234 aa)) is the ABC transporter domain. 60 to 67 (GHNGSGKS) provides a ligand contact to ATP.

This sequence belongs to the ABC transporter superfamily. Energy-coupling factor EcfA family. Forms a stable energy-coupling factor (ECF) transporter complex composed of 2 membrane-embedded substrate-binding proteins (S component), 2 ATP-binding proteins (A component) and 2 transmembrane proteins (T component).

Its subcellular location is the cell membrane. Its function is as follows. ATP-binding (A) component of a common energy-coupling factor (ECF) ABC-transporter complex. Unlike classic ABC transporters this ECF transporter provides the energy necessary to transport a number of different substrates. The sequence is that of Energy-coupling factor transporter ATP-binding protein EcfA1 from Ureaplasma parvum serovar 3 (strain ATCC 700970).